The sequence spans 366 residues: Peptide chain release factor 2 (366 aa).

Residue glutamine 253 is modified to N5-methylglutamine.

This sequence belongs to the prokaryotic/mitochondrial release factor family. Methylated by PrmC. Methylation increases the termination efficiency of RF2.

The protein localises to the cytoplasm. Functionally, peptide chain release factor 2 directs the termination of translation in response to the peptide chain termination codons UGA and UAA. The protein is Peptide chain release factor 2 of Yersinia pestis.